The sequence spans 259 residues: Transcription factor bHLH125 (259 aa).

The bHLH domain occupies 73 to 125 (SKKMKHRDIERQRRQEVSSLFKRLRTLLPFQYIQGKRSTSDHIVQAVNYIKDL).

Homodimer.

Its subcellular location is the nucleus. The polypeptide is Transcription factor bHLH125 (BHLH125) (Arabidopsis thaliana (Mouse-ear cress)).